The primary structure comprises 94 residues: Protein canopy homolog 1 (94 aa).

This sequence belongs to the canopy family.

The polypeptide is Protein canopy homolog 1 (Cnpy1) (Mus musculus (Mouse)).